The primary structure comprises 622 residues: Ferredoxin-fold anticodon-binding domain-containing protein 1 homolog (622 aa).

The 94-residue stretch at 529-622 (LYPPCYVHDV…IQRQLHVSPR (94 aa)) folds into the FDX-ACB domain.

The protein is Ferredoxin-fold anticodon-binding domain-containing protein 1 homolog (Fdxacb1) of Mus musculus (Mouse).